The sequence spans 349 residues: NAC domain-containing protein JA2 (349 aa).

Residues 14–163 (LPPGFRFYPT…EWVLCRIYKK (150 aa)) form the NAC domain. Residues 111–169 (VGIKKALVFYVGKAPKGSKTNWIMHEYRLFESSRKNNGSSKLDEWVLCRIYKKNSSGPK) mediate DNA binding. A disordered region spans residues 169–194 (KPLMSGLHSSNEYSHGSSTSSSSQFD). Over residues 177–191 (SSNEYSHGSSTSSSS) the composition is skewed to low complexity.

As to expression, expressed in guard cells of the epidermis.

The protein resides in the nucleus. Transcription factor involved in abscisic acid-mediated stomatal closure. Regulates the expression of NCED1, a gene involved in the biosynthesis of abscisic acid (ABA). Required for the stomatal closure induced by the bacterial pathogen Pseudomonas syringae pv tomato DC3000, but not for stomatal reopening. The polypeptide is NAC domain-containing protein JA2 (Solanum lycopersicum (Tomato)).